We begin with the raw amino-acid sequence, 912 residues long: Androgen receptor (912 aa).

A modulating region spans residues 1 to 550; sequence MEVQLGLGRV…PIDYYFPPQK (550 aa). The interaction with ZNF318 stretch occupies residues 1–579; sequence MEVQLGLGRV…GSCKVFFKRA (579 aa). Disordered regions lie at residues 35 to 156 and 204 to 236; these read QNPG…GPTF and QQQQEVVSEGGSSGRAREAAGAPTSSKDSYLGG. A Phosphoserine; by CDK9 modification is found at Ser-69. Phosphoserine is present on Ser-82. Low complexity predominate over residues 204–213; it reads QQQQEVVSEG. A compositionally biased stretch (polar residues) spans 226–236; it reads PTSSKDSYLGG. Residue Tyr-233 is modified to Phosphotyrosine; by CSK. Ser-266 is modified (phosphoserine). Tyr-277 is modified (phosphotyrosine; by CSK and TNK2). Residues Tyr-315, Tyr-354, Tyr-365, and Tyr-370 each carry the phosphotyrosine; by CSK modification. At Tyr-371 the chain carries Phosphotyrosine; by CSK and TNK2. The segment at 375–394 is disordered; it reads LSLAGPPPPPPSPHPHARIK. A compositionally biased stretch (pro residues) spans 379 to 388; it reads GPPPPPPSPH. Residue Lys-394 forms a Glycyl lysine isopeptide (Lys-Gly) (interchain with G-Cter in SUMO) linkage. The residue at position 401 (Tyr-401) is a Phosphotyrosine; by CSK. The interval 452 to 490 is disordered; sequence LYGPCGGSGGGGTGESVSVTPYGYTRPQQGLTGQEGDFP. Residues 455 to 465 are compositionally biased toward gly residues; that stretch reads PCGGSGGGGTG. Lys-513 is covalently cross-linked (Glycyl lysine isopeptide (Lys-Gly) (interchain with G-Cter in SUMO)). Phosphotyrosine; by CSK occurs at positions 527 and 544. The interval 544 to 911 is interaction with LPXN; it reads YYFPPQKTCL…GKVKPIYFHT (368 aa). Positions 551 to 624 form a DNA-binding region, nuclear receptor; that stretch reads TCLICGDEAS…AGMTLGARRL (74 aa). 2 consecutive NR C4-type zinc fingers follow at residues 552–572 and 588–612; these read CLICGDEASGCHYGALTCGSC and CASRNDCTIDKFRRKNCPPCRLRKC. The tract at residues 564-654 is interaction with HIPK3; the sequence is YGALTCGSCK…TEETTQKLTV (91 aa). An interaction with CCAR1 region spans residues 584-911; it reads QKYLCASRND…GKVKPIYFHT (328 aa). Positions 617–911 are interaction with KAT7; the sequence is MTLGARRLKK…GKVKPIYFHT (295 aa). A Phosphoserine; by STK4/MST1 modification is found at Ser-643. The 232-residue stretch at 661–892 folds into the NR LBD domain; it reads ECQPIFLNVL…DFPEMMAEII (232 aa). Positions 698 and 745 each coordinate 17beta-hydroxy-5alpha-androstan-3-one. Residues Lys-838 and Lys-840 each participate in a glycyl lysine isopeptide (Lys-Gly) (interchain with G-Cter in ubiquitin) cross-link. Thr-870 contributes to the 17beta-hydroxy-5alpha-androstan-3-one binding site. The residue at position 908 (Tyr-908) is a Phosphotyrosine; by CSK.

It belongs to the nuclear hormone receptor family. NR3 subfamily. In terms of assembly, binds DNA as a homodimer. Part of a ternary complex containing AR, EFCAB6/DJBP and PARK7. Interacts with HIPK3 and NR0B2 in the presence of androgen. The ligand binding domain interacts with KAT7/HBO1 in the presence of dihydrotestosterone. Interacts with EFCAB6/DJBP, PQBP1, RANBP9, RBAK, SPDEF, SRA1, TGFB1I1 and RREB1. Interacts with ZMIZ1/ZIMP10 and ZMIZ2/ZMIP7 which both enhance its transactivation activity. Interacts with SLC30A9 and RAD54L2/ARIP4. Interacts with MACROD1 (via macro domain). Interacts via the ligand-binding domain with LXXLL and FXXLF motifs from NCOA1, NCOA2, NCOA3 and MAGEA11. Interacts (via nuclear receptor DNA binding domain and nuclear receptor ligand binding domain) with NCOA4. The AR N-terminal poly-Gln region binds Ran resulting in enhancement of AR-mediated transactivation. Ran-binding decreases as the poly-Gln length increases. Interacts with HIP1 (via coiled coil domain). Interacts (via ligand-binding domain) with TRIM68. Interacts with TNK2. Interacts with USP26. Interacts with RNF6. Interacts (regulated by RNF6 probably through polyubiquitination) with RNF14; regulates AR transcriptional activity. Interacts with PRMT2 and TRIM24. Interacts with RACK1. Interacts with RANBP10; this interaction enhances dihydrotestosterone-induced AR transcriptional activity. Interacts with PRPF6 in a hormone-independent way; this interaction enhances dihydrotestosterone-induced AR transcriptional activity. Interacts with STK4/MST1. Interacts with ZIPK/DAPK3. Interacts with LPXN. Interacts with MAK. Part of a complex containing AR, MAK and NCOA3. Interacts with CRY1. Interacts with CCAR1 and GATA2. Interacts with ZNF318. Interacts with BUD31. Interacts with ARID4A. Interacts with ARID4B. Interacts (via NR LBD domain) with ZBTB7A; the interaction is direct and androgen-dependent. Interacts with NCOR1. Interacts with NCOR2. Interacts with CRY2 in a ligand-dependent manner. Post-translationally, phosphorylation by TNK2 enhances the DNA-binding and transcriptional activity. Phosphorylation at Ser-69 by CDK9 regulates AR promoter selectivity and cell growth. In terms of processing, sumoylated on Lys-394 (major) and Lys-513. Ubiquitinated. Deubiquitinated by USP26. 'Lys-6' and 'Lys-27'-linked polyubiquitination by RNF6 modulates AR transcriptional activity and specificity. Palmitoylated by ZDHHC7 and ZDHHC21. Palmitoylation is required for plasma membrane targeting and for rapid intracellular signaling via ERK and AKT kinases and cAMP generation.

The protein resides in the nucleus. It localises to the cytoplasm. Functionally, steroid hormone receptors are ligand-activated transcription factors that regulate eukaryotic gene expression and affect cellular proliferation and differentiation in target tissues. Transcription factor activity is modulated by bound coactivator and corepressor proteins like ZBTB7A that recruits NCOR1 and NCOR2 to the androgen response elements/ARE on target genes, negatively regulating androgen receptor signaling and androgen-induced cell proliferation. Transcription activation is also down-regulated by NR0B2. Activated, but not phosphorylated, by HIPK3 and ZIPK/DAPK3. In Crocuta crocuta (Spotted hyena), this protein is Androgen receptor (AR).